The chain runs to 88 residues: Cell division topological specificity factor (88 aa).

Belongs to the MinE family.

Its function is as follows. Prevents the cell division inhibition by proteins MinC and MinD at internal division sites while permitting inhibition at polar sites. This ensures cell division at the proper site by restricting the formation of a division septum at the midpoint of the long axis of the cell. In Escherichia fergusonii (strain ATCC 35469 / DSM 13698 / CCUG 18766 / IAM 14443 / JCM 21226 / LMG 7866 / NBRC 102419 / NCTC 12128 / CDC 0568-73), this protein is Cell division topological specificity factor.